Reading from the N-terminus, the 265-residue chain is Hydroxyethylthiazole kinase 2 (265 aa).

Met-39 contributes to the substrate binding site. Lys-115 and Thr-168 together coordinate ATP. Gly-195 contributes to the substrate binding site.

It belongs to the Thz kinase family. Mg(2+) is required as a cofactor.

It carries out the reaction 5-(2-hydroxyethyl)-4-methylthiazole + ATP = 4-methyl-5-(2-phosphooxyethyl)-thiazole + ADP + H(+). It participates in cofactor biosynthesis; thiamine diphosphate biosynthesis; 4-methyl-5-(2-phosphoethyl)-thiazole from 5-(2-hydroxyethyl)-4-methylthiazole: step 1/1. Its function is as follows. Catalyzes the phosphorylation of the hydroxyl group of 4-methyl-5-beta-hydroxyethylthiazole (THZ). This is Hydroxyethylthiazole kinase 2 from Clostridium botulinum (strain ATCC 19397 / Type A).